The chain runs to 211 residues: Histidine biosynthesis bifunctional protein HisIE (211 aa).

The tract at residues 1–122 is phosphoribosyl-AMP cyclohydrolase; that stretch reads MSFKTAEVSS…DPQEESQMVW (122 aa). The phosphoribosyl-ATP pyrophosphohydrolase stretch occupies residues 123–211; sequence LHQLEQLLAA…VINKLKERHK (89 aa).

In the N-terminal section; belongs to the PRA-CH family. It in the C-terminal section; belongs to the PRA-PH family.

It is found in the cytoplasm. It catalyses the reaction 1-(5-phospho-beta-D-ribosyl)-ATP + H2O = 1-(5-phospho-beta-D-ribosyl)-5'-AMP + diphosphate + H(+). The enzyme catalyses 1-(5-phospho-beta-D-ribosyl)-5'-AMP + H2O = 1-(5-phospho-beta-D-ribosyl)-5-[(5-phospho-beta-D-ribosylamino)methylideneamino]imidazole-4-carboxamide. Its pathway is amino-acid biosynthesis; L-histidine biosynthesis; L-histidine from 5-phospho-alpha-D-ribose 1-diphosphate: step 2/9. It functions in the pathway amino-acid biosynthesis; L-histidine biosynthesis; L-histidine from 5-phospho-alpha-D-ribose 1-diphosphate: step 3/9. The chain is Histidine biosynthesis bifunctional protein HisIE from Vibrio vulnificus (strain CMCP6).